Reading from the N-terminus, the 155-residue chain is MPILAPAELLASLSRDQRLLGLDLGSKTIGLALSDVSRTIATPFDTIRRTKFTQDAELLLAVVDKQGVGGLVLGLPVEMDGFEGPRCQSVRSFAANLARLRDMPIAYWDERLSTSAVTRTLLEADSSRKRRAEVVDKMAAAYILQGLLDNRSGFA.

Belongs to the YqgF nuclease family.

The protein localises to the cytoplasm. Its function is as follows. Could be a nuclease involved in processing of the 5'-end of pre-16S rRNA. The protein is Putative pre-16S rRNA nuclease of Paramagnetospirillum magneticum (strain ATCC 700264 / AMB-1) (Magnetospirillum magneticum).